A 265-amino-acid chain; its full sequence is Anamorsin homolog 1 (265 aa).

The interval 1-143 (MAATAAAALA…KASWSMGSSF (143 aa)) is N-terminal SAM-like domain. The interval 144 to 175 (PLKKATKGLPKIQIDDDSELIDEDSLLTEDDL) is linker. 4 residues coordinate [2Fe-2S] cluster: Cys186, Cys195, Cys198, and Cys200. A fe-S binding site A region spans residues 186–200 (CEVGATRKACKNCTC). [4Fe-4S] cluster-binding residues include Cys226, Cys229, Cys237, and Cys240. Short sequence motifs (cx2C motif) lie at residues 226–229 (CGNC) and 237–240 (CGTC). The tract at residues 226–240 (CGNCGLGDAFRCGTC) is fe-S binding site B.

It belongs to the anamorsin family. As to quaternary structure, monomer. The cofactor is [2Fe-2S] cluster. Requires [4Fe-4S] cluster as cofactor.

The protein resides in the cytoplasm. Its subcellular location is the mitochondrion intermembrane space. Functionally, component of the cytosolic iron-sulfur (Fe-S) protein assembly (CIA) machinery. Required for the maturation of extramitochondrial Fe-S proteins. Part of an electron transfer chain functioning in an early step of cytosolic Fe-S biogenesis, facilitating the de novo assembly of a [4Fe-4S] cluster on the cytosolic Fe-S scaffold complex. Electrons are transferred from NADPH via a FAD- and FMN-containing diflavin oxidoreductase. Together with the diflavin oxidoreductase, also required for the assembly of the diferric tyrosyl radical cofactor of ribonucleotide reductase (RNR), probably by providing electrons for reduction during radical cofactor maturation in the catalytic small subunit. The polypeptide is Anamorsin homolog 1 (Oryza sativa subsp. indica (Rice)).